Here is a 427-residue protein sequence, read N- to C-terminus: NADPH-dependent stearoyl-CoA 9-desaturase (427 aa).

Fe cation contacts are provided by His-90, His-94, His-125, His-129, His-130, His-304, His-308, and His-309.

This sequence belongs to the fatty acid desaturase type 1 family. In terms of assembly, interacts with the electron transfer protein Rv3230c to form a functional acyl-CoA desaturase complex. It depends on Fe(2+) as a cofactor. Post-translationally, is rapidly degraded by a mycobacterial protein degradation system that specifically targets the residues LAA at the C-terminus, leading to a post-translational proteolytic regulation of DesA3 essential activity.

It localises to the cell membrane. The catalysed reaction is octadecanoyl-CoA + NADPH + O2 + H(+) = (9Z)-octadecenoyl-CoA + NADP(+) + 2 H2O. It participates in lipid metabolism; fatty acid metabolism. Functionally, is likely involved in the aerobic desaturation system responsible for the synthesis of oleic acid from stearoyl-CoA; oleic acid is a precursor of mycobacterial membrane phospholipids and triglycerides. Catalyzes the conversion of stearoyl-CoA to oleoyl-CoA by introduction of a cis double bond between carbons 9 and 10 of the acyl chain. Requires the electron transfer partner Rv3230c to pass two electrons from NADPH to its active site diiron center. Is also able to catalyze the 9-desaturation of palmitoyl-CoA to palmitoleoyl-CoA. This chain is NADPH-dependent stearoyl-CoA 9-desaturase (desA3), found in Mycobacterium tuberculosis (strain CDC 1551 / Oshkosh).